The sequence spans 373 residues: Dual-specificity RNA methyltransferase RlmN (373 aa).

Residue E94 is the Proton acceptor of the active site. The 240-residue stretch at 100–339 (EDDRATLCVS…VTIRKTRGDD (240 aa)) folds into the Radical SAM core domain. A disulfide bridge links C107 with C344. Positions 114, 118, and 121 each coordinate [4Fe-4S] cluster. S-adenosyl-L-methionine is bound by residues 168 to 169 (GE), S200, 222 to 224 (SLH), and N301. The active-site S-methylcysteine intermediate is the C344.

This sequence belongs to the radical SAM superfamily. RlmN family. [4Fe-4S] cluster serves as cofactor.

It localises to the cytoplasm. The catalysed reaction is adenosine(2503) in 23S rRNA + 2 reduced [2Fe-2S]-[ferredoxin] + 2 S-adenosyl-L-methionine = 2-methyladenosine(2503) in 23S rRNA + 5'-deoxyadenosine + L-methionine + 2 oxidized [2Fe-2S]-[ferredoxin] + S-adenosyl-L-homocysteine. It carries out the reaction adenosine(37) in tRNA + 2 reduced [2Fe-2S]-[ferredoxin] + 2 S-adenosyl-L-methionine = 2-methyladenosine(37) in tRNA + 5'-deoxyadenosine + L-methionine + 2 oxidized [2Fe-2S]-[ferredoxin] + S-adenosyl-L-homocysteine. Its function is as follows. Specifically methylates position 2 of adenine 2503 in 23S rRNA and position 2 of adenine 37 in tRNAs. m2A2503 modification seems to play a crucial role in the proofreading step occurring at the peptidyl transferase center and thus would serve to optimize ribosomal fidelity. In Vibrio cholerae serotype O1 (strain M66-2), this protein is Dual-specificity RNA methyltransferase RlmN.